We begin with the raw amino-acid sequence, 256 residues long: Small ribosomal subunit protein eS1 (256 aa).

Over residues 1–18 (MAVGKNKRLSKGKKGLKK) the composition is skewed to basic residues. The segment at 1–20 (MAVGKNKRLSKGKKGLKKRT) is disordered. Residue Ala2 is modified to N-acetylalanine; partial.

Belongs to the eukaryotic ribosomal protein eS1 family. As to quaternary structure, component of the small ribosomal subunit. Mature ribosomes consist of a small (40S) and a large (60S) subunit. The 40S subunit contains about 33 different proteins and 1 molecule of RNA (18S). The 60S subunit contains about 49 different proteins and 3 molecules of RNA (25S, 5.8S and 5S).

It is found in the cytoplasm. The sequence is that of Small ribosomal subunit protein eS1 (rps1) from Talaromyces stipitatus (strain ATCC 10500 / CBS 375.48 / QM 6759 / NRRL 1006) (Penicillium stipitatum).